The following is a 298-amino-acid chain: Glutamyl-Q tRNA(Asp) synthetase (298 aa).

L-glutamate-binding positions include 12-16 and glutamate 48; that span reads RFAPT. The 'HIGH' region signature appears at 15-25; that stretch reads PTPSGYLHFGS. 4 residues coordinate Zn(2+): cysteine 104, cysteine 106, tyrosine 118, and cysteine 122. Tyrosine 175 and arginine 193 together coordinate L-glutamate. The 'KMSKS' region signature appears at 231–235; sequence KLGKS. Residue lysine 234 participates in ATP binding.

The protein belongs to the class-I aminoacyl-tRNA synthetase family. GluQ subfamily. The cofactor is Zn(2+).

Catalyzes the tRNA-independent activation of glutamate in presence of ATP and the subsequent transfer of glutamate onto a tRNA(Asp). Glutamate is transferred on the 2-amino-5-(4,5-dihydroxy-2-cyclopenten-1-yl) moiety of the queuosine in the wobble position of the QUC anticodon. The sequence is that of Glutamyl-Q tRNA(Asp) synthetase from Pseudomonas fluorescens (strain ATCC BAA-477 / NRRL B-23932 / Pf-5).